We begin with the raw amino-acid sequence, 440 residues long: tRNA-2-methylthio-N(6)-dimethylallyladenosine synthase (440 aa).

An MTTase N-terminal domain is found at 2–117 (KGLYIKTYGC…LPELIVKASR (116 aa)). The [4Fe-4S] cluster site is built by C11, C47, C80, C157, C161, and C164. The 232-residue stretch at 143-374 (NSQGSSAFLA…QELISKQQLE (232 aa)) folds into the Radical SAM core domain. The TRAM domain maps to 377-440 (QSMIGKTIPV…RQNSLLGCAA (64 aa)).

It belongs to the methylthiotransferase family. MiaB subfamily. As to quaternary structure, monomer. The cofactor is [4Fe-4S] cluster.

It localises to the cytoplasm. It catalyses the reaction N(6)-dimethylallyladenosine(37) in tRNA + (sulfur carrier)-SH + AH2 + 2 S-adenosyl-L-methionine = 2-methylsulfanyl-N(6)-dimethylallyladenosine(37) in tRNA + (sulfur carrier)-H + 5'-deoxyadenosine + L-methionine + A + S-adenosyl-L-homocysteine + 2 H(+). Functionally, catalyzes the methylthiolation of N6-(dimethylallyl)adenosine (i(6)A), leading to the formation of 2-methylthio-N6-(dimethylallyl)adenosine (ms(2)i(6)A) at position 37 in tRNAs that read codons beginning with uridine. The protein is tRNA-2-methylthio-N(6)-dimethylallyladenosine synthase of Wolbachia pipientis subsp. Culex pipiens (strain wPip).